Reading from the N-terminus, the 332-residue chain is MQIGPYSIAPKVILAPMAGVTDKPFRLLCKRLGAGLAVSEMTISDPRFWGTRKSLHRMDHAGEPDPISVQIAGTEPQQLAEAARYNVDHGAQLIDINMGCPAKKVCNAWAGSALMRDEELVARILTAVVQAVNVPVTLKIRTGWDCDHRNGPTIARIAQDCGIAALAVHGRTRDQHYTGSAEYATIAQIKAALQIPVVANGDIDSPQKAAQVLRETGADAVMIGRAAQGRPWIFGEVAHFLATGEVLPPPSLAFVRDTLLGHLEALHAFYGQPQGVRIARKHLGWYAKDHPQSADFRAVVNRAETPDAQLALTRDYFDALIAGVPPALSDAA.

FMN contacts are provided by residues 16–18 (PMA) and Gln-70. Catalysis depends on Cys-100, which acts as the Proton donor. FMN contacts are provided by residues Lys-139, 200–202 (NGD), and 224–225 (GR).

The protein belongs to the Dus family. DusB subfamily. FMN serves as cofactor.

The catalysed reaction is a 5,6-dihydrouridine in tRNA + NAD(+) = a uridine in tRNA + NADH + H(+). It carries out the reaction a 5,6-dihydrouridine in tRNA + NADP(+) = a uridine in tRNA + NADPH + H(+). Catalyzes the synthesis of 5,6-dihydrouridine (D), a modified base found in the D-loop of most tRNAs, via the reduction of the C5-C6 double bond in target uridines. The chain is tRNA-dihydrouridine synthase B from Xanthomonas axonopodis pv. citri (strain 306).